The sequence spans 399 residues: Elongation factor Tu (399 aa).

Positions 10–204 (KPHVNIGTIG…AVDASIPEPE (195 aa)) constitute a tr-type G domain. Residues 19–26 (GHVDHGKT) are G1. 19–26 (GHVDHGKT) provides a ligand contact to GTP. T26 is a Mg(2+) binding site. The G2 stretch occupies residues 60-64 (GITIN). The tract at residues 81-84 (DCPG) is G3. Residues 81 to 85 (DCPGH) and 136 to 139 (NKCD) contribute to the GTP site. Residues 136-139 (NKCD) form a G4 region. The tract at residues 174–176 (SGL) is G5.

The protein belongs to the TRAFAC class translation factor GTPase superfamily. Classic translation factor GTPase family. EF-Tu/EF-1A subfamily. Monomer.

Its subcellular location is the cytoplasm. It carries out the reaction GTP + H2O = GDP + phosphate + H(+). Its function is as follows. GTP hydrolase that promotes the GTP-dependent binding of aminoacyl-tRNA to the A-site of ribosomes during protein biosynthesis. In Prochlorococcus marinus (strain MIT 9313), this protein is Elongation factor Tu.